The sequence spans 143 residues: Nucleoside diphosphate kinase (143 aa).

The ATP site is built by Lys10, Phe58, Arg86, Thr92, Arg103, and Asn113. His116 serves as the catalytic Pros-phosphohistidine intermediate.

Belongs to the NDK family. In terms of assembly, homotetramer. The cofactor is Mg(2+).

It localises to the cytoplasm. It carries out the reaction a 2'-deoxyribonucleoside 5'-diphosphate + ATP = a 2'-deoxyribonucleoside 5'-triphosphate + ADP. It catalyses the reaction a ribonucleoside 5'-diphosphate + ATP = a ribonucleoside 5'-triphosphate + ADP. Major role in the synthesis of nucleoside triphosphates other than ATP. The ATP gamma phosphate is transferred to the NDP beta phosphate via a ping-pong mechanism, using a phosphorylated active-site intermediate. The protein is Nucleoside diphosphate kinase of Ehrlichia ruminantium (strain Welgevonden).